A 133-amino-acid chain; its full sequence is MSWQAYVDDHLMCEIEGTNNHLTAAAILGVDGSVWAQSANFPQFKPDEISAVVKEFDEAGTLAPTGLHLGGTKYMVIQSEAGQVIRGKKGPGGICVKKTGQALIFGIYDEPVTPGQCNMIVERLGDYLIEQGL.

An intrachain disulfide couples C95 to C117.

The protein belongs to the profilin family. Occurs in many kinds of cells as a complex with monomeric actin in a 1:1 ratio. In terms of tissue distribution, expressed in pollen (at protein and mRNA level).

It localises to the cytoplasm. The protein resides in the cytoskeleton. Its function is as follows. Binds to actin and affects the structure of the cytoskeleton. At high concentrations, profilin prevents the polymerization of actin, whereas it enhances it at low concentrations. This Kali turgidum (Prickly saltwort) protein is Profilin Sal k 4.0301.